We begin with the raw amino-acid sequence, 362 residues long: Probable aromatic amino acid hydroxylase (362 aa).

Fe cation contacts are provided by H200 and H205.

Belongs to the biopterin-dependent aromatic amino acid hydroxylase family. The cofactor is Fe(2+).

This chain is Probable aromatic amino acid hydroxylase, found in Chlamydia pneumoniae (Chlamydophila pneumoniae).